We begin with the raw amino-acid sequence, 395 residues long: S-adenosylmethionine synthase (395 aa).

An ATP-binding site is contributed by His-16. Asp-18 contacts Mg(2+). Glu-44 contributes to the K(+) binding site. L-methionine is bound by residues Glu-57 and Gln-100. The interval Gln-100 to Arg-110 is flexible loop. ATP-binding positions include Asp-167–Lys-169, Arg-233–Phe-234, Asp-242, Arg-248–Lys-249, Ala-265, and Lys-269. Position 242 (Asp-242) interacts with L-methionine. Lys-273 provides a ligand contact to L-methionine.

Belongs to the AdoMet synthase family. In terms of assembly, homotetramer; dimer of dimers. Requires Mg(2+) as cofactor. K(+) serves as cofactor.

The protein resides in the cytoplasm. It carries out the reaction L-methionine + ATP + H2O = S-adenosyl-L-methionine + phosphate + diphosphate. The protein operates within amino-acid biosynthesis; S-adenosyl-L-methionine biosynthesis; S-adenosyl-L-methionine from L-methionine: step 1/1. In terms of biological role, catalyzes the formation of S-adenosylmethionine (AdoMet) from methionine and ATP. The overall synthetic reaction is composed of two sequential steps, AdoMet formation and the subsequent tripolyphosphate hydrolysis which occurs prior to release of AdoMet from the enzyme. This chain is S-adenosylmethionine synthase, found in Burkholderia vietnamiensis (strain G4 / LMG 22486) (Burkholderia cepacia (strain R1808)).